Here is a 229-residue protein sequence, read N- to C-terminus: Casparian strip membrane protein 1 (229 aa).

Over 1–67 the chain is Cytoplasmic; it reads MSTSEAGAAA…FRRADRGSRC (67 aa). The helical transmembrane segment at 68–88 threads the bilayer; sequence VALLDFVLRVAAFGPALAAAI. The Extracellular segment spans residues 89-115; it reads ATGTSDETLSVFTQFFQFHARFDDFPA. A helical transmembrane segment spans residues 116-136; it reads LLFFMVANAIAAGYLVLSLPF. The Cytoplasmic portion of the chain corresponds to 137 to 157; the sequence is SAVIVLRPQAIGLRHLLLVCD. The helical transmembrane segment at 158 to 178 threads the bilayer; that stretch reads MIIAALLTAAAAAAAAIVDLA. Over 179–205 the chain is Extracellular; that stretch reads HSGNLRANWVPICMQFHGFCQRTSGAV. The helical transmembrane segment at 206 to 226 threads the bilayer; it reads VGSFLAVLVLLFLVILAAFAI. The Cytoplasmic segment spans residues 227-229; sequence RKR.

The protein belongs to the Casparian strip membrane proteins (CASP) family. In terms of assembly, homodimer and heterodimers.

Its subcellular location is the cell membrane. Functionally, regulates membrane-cell wall junctions and localized cell wall deposition. Required for establishment of the Casparian strip membrane domain (CSD) and the subsequent formation of Casparian strips, a cell wall modification of the root endodermis that determines an apoplastic barrier between the intraorganismal apoplasm and the extraorganismal apoplasm and prevents lateral diffusion. The polypeptide is Casparian strip membrane protein 1 (Sorghum bicolor (Sorghum)).